A 420-amino-acid chain; its full sequence is Tryptophan--tRNA ligase (420 aa).

The short motif at 72-80 is the 'HIGH' region element; that stretch reads PSGLPHFGH. The 'KMSKS' region motif lies at 308 to 312; it reads KMSSS.

The protein belongs to the class-I aminoacyl-tRNA synthetase family.

It localises to the cytoplasm. The catalysed reaction is tRNA(Trp) + L-tryptophan + ATP = L-tryptophyl-tRNA(Trp) + AMP + diphosphate + H(+). This Archaeoglobus fulgidus (strain ATCC 49558 / DSM 4304 / JCM 9628 / NBRC 100126 / VC-16) protein is Tryptophan--tRNA ligase.